A 156-amino-acid chain; its full sequence is Hexachlorocyclohexane dehydrochlorinase 2 (156 aa).

Aspartate 25 is a catalytic residue. The Proton acceptor role is filled by histidine 73.

It belongs to the HCH dehydrochlorinase family. In terms of assembly, homotrimer.

The protein localises to the periplasm. The enzyme catalyses gamma-hexachlorocyclohexane = (3R,4S,5S,6R)-pentachlorocyclohexene + chloride + H(+). It catalyses the reaction (3R,4S,5S,6R)-pentachlorocyclohexene = (3R,6R)-1,3,4,6-tetrachlorocyclohexa-1,4-diene + chloride + H(+). It participates in xenobiotic degradation; hexachlorocyclohexane degradation. Functionally, catalyzes the conversion of the important environmental pollutant gamma-hexachlorocyclohexane (gamma-HCH or lindane) to 1,3,4,6-tetrachloro-1,4-cyclohexadiene (1,4-TCDN) via gamma-pentachlorocyclohexene (gamma-PCCH). Proceeds by two successive 1,2-anti conformationally dependent dehydrochlorinations. Also shows activity with alpha- and delta-HCH, giving alpha- and delta-PCCH respectively, but not with the beta isomer. This Sphingobium indicum (strain DSM 16412 / CCM 7286 / MTCC 6364 / B90A) protein is Hexachlorocyclohexane dehydrochlorinase 2.